Consider the following 530-residue polypeptide: Vesicular acetylcholine transporter (530 aa).

Over 1 to 33 (MEPTAPTGQARAAATKLSEAVGAALQEPQRQRR) the chain is Cytoplasmic. The helical transmembrane segment at 34-54 (LVLVIVCVALLLDNMLYMVIV) threads the bilayer. The Lumenal, vesicle portion of the chain corresponds to 55–125 (PIVPDYIAHM…PTESEDVKIG (71 aa)). N-linked (GlcNAc...) asparagine glycans are attached at residues N89 and N96. The helical transmembrane segment at 126-146 (VLFASKAILQLLVNPLSGPFI) threads the bilayer. Residues 147–152 (DRMSYD) are Cytoplasmic-facing. The helical transmembrane segment at 153–173 (VPLLIGLGVMFASTVMFAFAE) threads the bilayer. Residues 174-182 (DYATLFAAR) are Lumenal, vesicle-facing. A helical transmembrane segment spans residues 183–203 (SLQGLGSAFADTSGIAMIADK). Topologically, residues 204 to 213 (YPEEPERSRA) are cytoplasmic. A helical membrane pass occupies residues 214–234 (LGVALAFISFGSLVAPPFGGI). Residues 235 to 242 (LYEFAGKR) lie on the Lumenal, vesicle side of the membrane. Residues 243–263 (VPFLVLAAVSLFDALLLLAVA) traverse the membrane as a helical segment. The Cytoplasmic portion of the chain corresponds to 264-289 (KPFSAAARARANLPVGTPIHRLMLDP). A helical transmembrane segment spans residues 290–310 (YIAVVAGALTTCNIPLAFLEP). Residues 311–325 (TIATWMKHTMAASEW) lie on the Lumenal, vesicle side of the membrane. A helical transmembrane segment spans residues 326 to 346 (EMGMVWLPAFVPHVLGVYLTV). Residues 347–356 (RLAARYPHLQ) lie on the Cytoplasmic side of the membrane. The chain crosses the membrane as a helical span at residues 357–377 (WLYGALGLAVIGVSSCVVPAC). At 378–388 (RSFAPLVVSLC) the chain is on the lumenal, vesicle side. The chain crosses the membrane as a helical span at residues 389-409 (GLCFGIALVDTALLPTLAFLV). Topologically, residues 410–422 (DVRHVSVYGSVYA) are cytoplasmic. A helical transmembrane segment spans residues 423 to 443 (IADISYSVAYALGPIVAGHIV). Residues 444-447 (HSLG) are Lumenal, vesicle-facing. A helical membrane pass occupies residues 448-468 (FEQLSLGMGLANLLYAPVLLL). Residues 469-530 (LRNVGLLTRS…EDDYNYYSRS (62 aa)) lie on the Cytoplasmic side of the membrane. The tract at residues 471-530 (NVGLLTRSRSERDVLLDEPPQGLYDAVRLREVQGKDGGEPCSPPGPFDGCEDDYNYYSRS) is mediates interaction with SEC14L1. Residues 504–530 (GKDGGEPCSPPGPFDGCEDDYNYYSRS) are disordered.

Belongs to the major facilitator superfamily. Vesicular transporter family. Interacts with SEC14L1. In terms of tissue distribution, high expression in all major cholinergic cell groups, including peripheral postganglionic parasympathetic cells, preganglionic sympathetic and parasympathetic cells, ventral spinal cord and brainstem motoneurons, cell groups in the basal forebrain, the habenula and the corpus striatum. Weakly expressed in the cortex and hippocampus.

Its subcellular location is the cytoplasmic vesicle. It localises to the secretory vesicle. The protein resides in the synaptic vesicle membrane. It catalyses the reaction acetylcholine(out) + 2 H(+)(in) = acetylcholine(in) + 2 H(+)(out). The catalysed reaction is choline(in) + 2 H(+)(out) = choline(out) + 2 H(+)(in). It carries out the reaction serotonin(in) + 2 H(+)(out) = serotonin(out) + 2 H(+)(in). With respect to regulation, potently inhibited by L-vesamicol. In terms of biological role, electrogenic antiporter that exchanges one cholinergic neurotransmitter, acetylcholine or choline, with two intravesicular protons across the membrane of synaptic vesicles. Uses the electrochemical proton gradient established by the V-type proton-pump ATPase to store neurotransmitters inside the vesicles prior to their release via exocytosis. Determines cholinergic vesicular quantal size at presynaptic nerve terminals in developing neuro-muscular junctions with an impact on motor neuron differentiation and innervation pattern. Part of forebrain cholinergic system, regulates hippocampal synapse transmissions that underlie spatial memory formation. Can transport serotonin. This chain is Vesicular acetylcholine transporter (Slc18a3), found in Rattus norvegicus (Rat).